The sequence spans 161 residues: 2-C-methyl-D-erythritol 2,4-cyclodiphosphate synthase (161 aa).

The a divalent metal cation site is built by aspartate 10 and histidine 12. 4-CDP-2-C-methyl-D-erythritol 2-phosphate contacts are provided by residues 10–12 (DVH) and 36–37 (HS). Histidine 44 lines the a divalent metal cation pocket. 4-CDP-2-C-methyl-D-erythritol 2-phosphate is bound by residues 58-60 (DIG), 63-67 (FSDTD), and arginine 144.

It belongs to the IspF family. As to quaternary structure, homotrimer. A divalent metal cation serves as cofactor.

The catalysed reaction is 4-CDP-2-C-methyl-D-erythritol 2-phosphate = 2-C-methyl-D-erythritol 2,4-cyclic diphosphate + CMP. It participates in isoprenoid biosynthesis; isopentenyl diphosphate biosynthesis via DXP pathway; isopentenyl diphosphate from 1-deoxy-D-xylulose 5-phosphate: step 4/6. Its function is as follows. Involved in the biosynthesis of isopentenyl diphosphate (IPP) and dimethylallyl diphosphate (DMAPP), two major building blocks of isoprenoid compounds. Catalyzes the conversion of 4-diphosphocytidyl-2-C-methyl-D-erythritol 2-phosphate (CDP-ME2P) to 2-C-methyl-D-erythritol 2,4-cyclodiphosphate (ME-CPP) with a corresponding release of cytidine 5-monophosphate (CMP). This chain is 2-C-methyl-D-erythritol 2,4-cyclodiphosphate synthase, found in Burkholderia lata (strain ATCC 17760 / DSM 23089 / LMG 22485 / NCIMB 9086 / R18194 / 383).